We begin with the raw amino-acid sequence, 122 residues long: Holo-[acyl-carrier-protein] synthase (122 aa).

Mg(2+)-binding residues include aspartate 8 and glutamate 56.

Belongs to the P-Pant transferase superfamily. AcpS family. It depends on Mg(2+) as a cofactor.

It localises to the cytoplasm. It carries out the reaction apo-[ACP] + CoA = holo-[ACP] + adenosine 3',5'-bisphosphate + H(+). In terms of biological role, transfers the 4'-phosphopantetheine moiety from coenzyme A to a Ser of acyl-carrier-protein. This is Holo-[acyl-carrier-protein] synthase from Alkaliphilus metalliredigens (strain QYMF).